The sequence spans 737 residues: Polyribonucleotide nucleotidyltransferase (737 aa).

Mg(2+) contacts are provided by Asp489 and Asp495. The 60-residue stretch at 556-615 folds into the KH domain; the sequence is PKIDTIKIDVDKIKIVIGKGGETIDKIIAETGVKIDIDEEGNVSIYSSDQDAINRAKEII. One can recognise an S1 motif domain in the interval 625-693; that stretch reads DEVYRAKVVR…EKGRIDASMK (69 aa). Residues 691–737 are disordered; sequence SMKALLPRPPKPEHDEKGEKSERPHRPRHQKDYKPKKEFTETPKDSE. A compositionally biased stretch (basic and acidic residues) spans 700–737; sequence PKPEHDEKGEKSERPHRPRHQKDYKPKKEFTETPKDSE.

The protein belongs to the polyribonucleotide nucleotidyltransferase family. Mg(2+) is required as a cofactor.

It is found in the cytoplasm. The catalysed reaction is RNA(n+1) + phosphate = RNA(n) + a ribonucleoside 5'-diphosphate. In terms of biological role, involved in mRNA degradation. Catalyzes the phosphorolysis of single-stranded polyribonucleotides processively in the 3'- to 5'-direction. The protein is Polyribonucleotide nucleotidyltransferase of Streptococcus pneumoniae serotype 2 (strain D39 / NCTC 7466).